The sequence spans 566 residues: Phenylalanine--tRNA ligase beta subunit (566 aa).

The 76-residue stretch at 287–362 folds into the B5 domain; sequence YFQEEVEFNV…IGEGLSSFNP (76 aa). The Mg(2+) site is built by Asp-340, Asp-346, Glu-349, and Asp-350.

The protein belongs to the phenylalanyl-tRNA synthetase beta subunit family. Type 2 subfamily. Tetramer of two alpha and two beta subunits. The cofactor is Mg(2+).

It localises to the cytoplasm. It catalyses the reaction tRNA(Phe) + L-phenylalanine + ATP = L-phenylalanyl-tRNA(Phe) + AMP + diphosphate + H(+). The polypeptide is Phenylalanine--tRNA ligase beta subunit (Borreliella burgdorferi (strain ZS7) (Borrelia burgdorferi)).